The primary structure comprises 294 residues: Homoserine kinase (294 aa).

An ATP-binding site is contributed by 83 to 93; it reads PLARGLGSSAS.

It belongs to the GHMP kinase family. Homoserine kinase subfamily.

Its subcellular location is the cytoplasm. The catalysed reaction is L-homoserine + ATP = O-phospho-L-homoserine + ADP + H(+). Its pathway is amino-acid biosynthesis; L-threonine biosynthesis; L-threonine from L-aspartate: step 4/5. Functionally, catalyzes the ATP-dependent phosphorylation of L-homoserine to L-homoserine phosphate. The protein is Homoserine kinase of Oceanobacillus iheyensis (strain DSM 14371 / CIP 107618 / JCM 11309 / KCTC 3954 / HTE831).